A 239-amino-acid chain; its full sequence is Transcriptional regulatory protein DcuR (239 aa).

The Response regulatory domain maps to 3–121; the sequence is NVLIIDDDAM…RFEEALTGWR (119 aa). Asp56 is modified (4-aspartylphosphate). The H-T-H motif DNA-binding region spans 181-200; that stretch reads TDELANEVNISRVSCRKYLI.

In terms of processing, phosphorylated and activated by DcuS.

The protein resides in the cytoplasm. Its function is as follows. Member of the two-component regulatory system DcuR/DcuS. Involved in the C4-dicarboxylate-stimulated regulation of the genes encoding the anaerobic fumarate respiratory system (frdABCD; nuoAN; dcuB; dcuC; sdhCDAB; etc.). Weakly regulates the aerobic C4-dicarboxylate transporter dctA. The sequence is that of Transcriptional regulatory protein DcuR (dcuR) from Escherichia coli O157:H7.